We begin with the raw amino-acid sequence, 362 residues long: L-asparaginase 2-1 (362 aa).

An N-terminal signal peptide occupies residues 1 to 25 (MRSLNTLLLSLFVAMSSGAPLLKIR). An N-linked (GlcNAc...) asparagine glycan is attached at Asn29. The region spanning 33–359 (PSIKIFGTGG…DQIRSVFSGV (327 aa)) is the Asparaginase/glutaminase domain. The active-site O-isoaspartyl threonine intermediate is the Thr43. A substrate-binding site is contributed by Ser89. Asn93 carries an N-linked (GlcNAc...) asparagine glycan. 122-123 (TD) is a binding site for substrate. N-linked (GlcNAc...) asparagine glycosylation is present at Asn239.

This sequence belongs to the asparaginase 1 family.

The protein localises to the secreted. The protein resides in the periplasm. The catalysed reaction is L-asparagine + H2O = L-aspartate + NH4(+). The polypeptide is L-asparaginase 2-1 (ASP3-1) (Saccharomyces cerevisiae (strain ATCC 204508 / S288c) (Baker's yeast)).